We begin with the raw amino-acid sequence, 427 residues long: Diaminobutyrate--2-oxoglutarate transaminase (427 aa).

Lysine 269 bears the N6-(pyridoxal phosphate)lysine mark.

It belongs to the class-III pyridoxal-phosphate-dependent aminotransferase family. Pyridoxal 5'-phosphate serves as cofactor.

The catalysed reaction is L-2,4-diaminobutanoate + 2-oxoglutarate = L-aspartate 4-semialdehyde + L-glutamate. It functions in the pathway amine and polyamine biosynthesis; ectoine biosynthesis; L-ectoine from L-aspartate 4-semialdehyde: step 1/3. Its function is as follows. Catalyzes reversively the conversion of L-aspartate beta-semialdehyde (ASA) to L-2,4-diaminobutyrate (DABA) by transamination with L-glutamate. This Halalkalibacterium halodurans (strain ATCC BAA-125 / DSM 18197 / FERM 7344 / JCM 9153 / C-125) (Bacillus halodurans) protein is Diaminobutyrate--2-oxoglutarate transaminase (ectB).